A 219-amino-acid polypeptide reads, in one-letter code: Capsid protein (219 aa).

The interval 5-29 (RRRRVVRRRKPVRRLRRRRRRFFKR) is nuclear localization signals.

It belongs to the circoviridae capsid protein family. In terms of assembly, homomultimer. Assembles in the nucleus, presumably in an immature form, then migrates to the cytoplasm once assembled as mature virion. Interacts with Rep; this interaction relocates Rep into the nucleus.

Its subcellular location is the host nucleus. It is found in the virion. In terms of biological role, self-assembles to form the virion icosahedral capsid with a T=1 symmetry. This very small capsid (17-22 nm in diameter) allows the virus to be very stable in the environment and resistant to some disinfectants, including detergents. Essential for the initial attachment to heparan sulfate moieties and chondroitin sulfate B of the host cell surface proteoglycans. After attachment, the virus is endocytosed and traffics to the nucleus. The capsid protein binds and transports the viral genome and Rep across the nuclear envelope. The protein is Capsid protein (Cap) of Homo sapiens (Human).